A 437-amino-acid polypeptide reads, in one-letter code: GTPase Der (437 aa).

EngA-type G domains follow at residues 4 to 167 (PVVA…AEKD) and 175 to 352 (IRFS…DHQH). GTP is bound by residues 10 to 17 (GRPNVGKS), 57 to 61 (DTGGI), 119 to 122 (NKVD), 181 to 188 (GRPNVGKS), 229 to 233 (DTAGI), and 294 to 297 (NKWD). The region spanning 353 to 437 (RRIQSAVLND…PIRLIKRRRK (85 aa)) is the KH-like domain.

The protein belongs to the TRAFAC class TrmE-Era-EngA-EngB-Septin-like GTPase superfamily. EngA (Der) GTPase family. As to quaternary structure, associates with the 50S ribosomal subunit.

Functionally, GTPase that plays an essential role in the late steps of ribosome biogenesis. In Limosilactobacillus fermentum (strain NBRC 3956 / LMG 18251) (Lactobacillus fermentum), this protein is GTPase Der.